The sequence spans 229 residues: Platelet-activating factor acetylhydrolase IB subunit alpha2 (229 aa).

At S2 the chain carries N-acetylserine. Residue S2 is modified to Phosphoserine. S48 is an active-site residue. Residue S64 is modified to Phosphoserine. Catalysis depends on residues D193 and H196. T220 is modified (phosphothreonine).

Belongs to the 'GDSL' lipolytic enzyme family. Platelet-activating factor acetylhydrolase IB beta/gamma subunits subfamily. As to quaternary structure, forms a catalytic dimer which is either homodimer (alpha2/alpha2 homodimer) or heterodimer with PAFAH1B3 (alpha2/alpha1 heterodimer). Component of the cytosolic (PAF-AH (I)) heterotetrameric enzyme, which is composed of PAFAH1B1 (beta), PAFAH1B2 (alpha2) and PAFAH1B3 (alpha1) subunits. The catalytic activity of the enzyme resides in the alpha1 (PAFAH1B3) and alpha2 (PAFAH1B2) subunits, whereas the beta subunit (PAFAH1B1) has regulatory activity. Trimer formation is not essential for the catalytic activity. Interacts (homodimer form) with PAFAH1B1 (homodimer form); PAFAH1B2 competes with NDEL1 for PAFAH1B1 binding. Interacts with VLDLR; this interaction may modulate the Reelin pathway.

The protein resides in the cytoplasm. The enzyme catalyses a 1-O-alkyl-2-acetyl-sn-glycero-3-phosphocholine + H2O = a 1-O-alkyl-sn-glycero-3-phosphocholine + acetate + H(+). It catalyses the reaction 1-O-hexadecyl-2-acetyl-sn-glycero-3-phosphocholine + H2O = 1-O-hexadecyl-sn-glycero-3-phosphocholine + acetate + H(+). The catalysed reaction is 1-O-hexadecyl-2-acetyl-sn-glycero-3-phosphate + H2O = 1-O-hexadecyl-sn-glycero-3-phosphate + acetate + H(+). It carries out the reaction 1-O-hexadecyl-2-acetyl-sn-glycero-3-phosphoethanolamine + H2O = 1-O-hexadecyl-sn-glycero-3-phosphoethanolamine + acetate + H(+). With respect to regulation, beta subunit (PAFAH1B1) stimulates the acetylhydrolase activity of the alpha2/alpha2 catalytic homodimer. Functionally, alpha2 catalytic subunit of the cytosolic type I platelet-activating factor (PAF) acetylhydrolase (PAF-AH (I)) heterotetrameric enzyme that catalyzes the hydrolyze of the acetyl group at the sn-2 position of PAF and its analogs and modulates the action of PAF. The activity and substrate specificity of PAF-AH (I) are affected by its subunit composition. The alpha2/alpha2 homodimer (PAFAH1B2/PAFAH1B2 homodimer) hydrolyzes PAF and 1-O-alkyl-2-acetyl-sn-glycero-3-phosphorylethanolamine (AAGPE) more efficiently than 1-O-alkyl-2-acetyl-sn-glycero-3-phosphoric acid (AAGPA). In contrast, the alpha1/alpha2 heterodimer(PAFAH1B3/PAFAH1B3 heterodimer) hydrolyzes AAGPA more efficiently than PAF, but has little hydrolytic activity towards AAGPE. May play a role in male germ cell meiosis during the late pachytenestage and meiotic divisions as well as early spermiogenesis. This chain is Platelet-activating factor acetylhydrolase IB subunit alpha2, found in Mus musculus (Mouse).